Here is a 130-residue protein sequence, read N- to C-terminus: Small ribosomal subunit protein uS8 (130 aa).

Belongs to the universal ribosomal protein uS8 family. As to quaternary structure, part of the 30S ribosomal subunit.

One of the primary rRNA binding proteins, it binds directly to 16S rRNA central domain where it helps coordinate assembly of the platform of the 30S subunit. This is Small ribosomal subunit protein uS8 from Caldivirga maquilingensis (strain ATCC 700844 / DSM 13496 / JCM 10307 / IC-167).